The primary structure comprises 189 residues: Elongation factor P (189 aa).

This sequence belongs to the elongation factor P family.

Its subcellular location is the cytoplasm. The protein operates within protein biosynthesis; polypeptide chain elongation. Functionally, involved in peptide bond synthesis. Stimulates efficient translation and peptide-bond synthesis on native or reconstituted 70S ribosomes in vitro. Probably functions indirectly by altering the affinity of the ribosome for aminoacyl-tRNA, thus increasing their reactivity as acceptors for peptidyl transferase. The chain is Elongation factor P from Pseudomonas syringae pv. syringae (strain B728a).